The primary structure comprises 471 residues: Heparan-sulfate 6-O-sulfotransferase 3 (471 aa).

Topologically, residues 1–4 are cytoplasmic; that stretch reads MDER. The chain crosses the membrane as a helical; Signal-anchor for type II membrane protein span at residues 5–27; it reads FNKWLLTPVLTLLFVVIMYQYVS. The Lumenal segment spans residues 28-471; that stretch reads PSCTSSCTNF…EDYNSQVVRW (444 aa). A disordered region spans residues 39 to 122; the sequence is EQPRAGEAGP…EAPENGSLPR (84 aa). Residues 41 to 62 show a composition bias toward low complexity; that stretch reads PRAGEAGPPAVPGPARRAQAPP. The segment covering 70–81 has biased composition (pro residues); that stretch reads QLPPPPRGPPEG. Positions 88 to 114 are enriched in acidic residues; sequence PEEEDEEPGDPREGEEEEEEDEPDPEA. N-linked (GlcNAc...) asparagine glycans are attached at residues N117 and N128. 152–160 contacts 3'-phosphoadenylyl sulfate; it reads HIQKTGGTT. Residues 182-183, R199, W204, and H209 contribute to the substrate site; that span reads KK. The Proton acceptor role is filled by H209. The N-linked (GlcNAc...) asparagine glycan is linked to N231. 2 residues coordinate 3'-phosphoadenylyl sulfate: R245 and S253. Substrate is bound by residues H257 and W264. N324 and N329 each carry an N-linked (GlcNAc...) asparagine glycan. 377–379 contacts 3'-phosphoadenylyl sulfate; sequence TQF. N-linked (GlcNAc...) asparagine glycosylation occurs at N380. Position 383-384 (383-384) interacts with 3'-phosphoadenylyl sulfate; sequence RA. Positions 422-471 are disordered; the sequence is TKQLEHQRDRQKRREERRLQREHRDHQWPKEDGAAEGTVTEDYNSQVVRW. Residues 423–454 show a composition bias toward basic and acidic residues; the sequence is KQLEHQRDRQKRREERRLQREHRDHQWPKEDG. Polar residues predominate over residues 462–471; it reads EDYNSQVVRW.

Belongs to the sulfotransferase 6 family.

It is found in the membrane. The enzyme catalyses alpha-D-glucosaminyl-[heparan sulfate](n) + 3'-phosphoadenylyl sulfate = 6-sulfo-alpha-D-glucosaminyl-[heparan sulfate](n) + adenosine 3',5'-bisphosphate + H(+). In terms of biological role, 6-O-sulfation enzyme which catalyzes the transfer of sulfate from 3'-phosphoadenosine 5'-phosphosulfate (PAPS) to position 6 of the N-sulfoglucosamine residue (GlcNS) of heparan sulfate. The sequence is that of Heparan-sulfate 6-O-sulfotransferase 3 (HS6ST3) from Homo sapiens (Human).